A 194-amino-acid chain; its full sequence is dCTP deaminase (194 aa).

Residues Arg-110–Arg-115, Asp-128, Val-136–Glu-138, Tyr-171, Lys-178, and Gln-182 contribute to the dCTP site. The active-site Proton donor/acceptor is Glu-138. The interval Tyr-171 to Ser-194 is disordered.

This sequence belongs to the dCTP deaminase family. In terms of assembly, homotrimer.

It catalyses the reaction dCTP + H2O + H(+) = dUTP + NH4(+). It participates in pyrimidine metabolism; dUMP biosynthesis; dUMP from dCTP (dUTP route): step 1/2. Its function is as follows. Catalyzes the deamination of dCTP to dUTP. The sequence is that of dCTP deaminase from Shewanella amazonensis (strain ATCC BAA-1098 / SB2B).